Consider the following 447-residue polypeptide: Alpha-1,3-mannosyl-glycoprotein 2-beta-N-acetylglucosaminyltransferase (447 aa).

Residues 1–6 lie on the Cytoplasmic side of the membrane; the sequence is MLKKQS. A helical; Signal-anchor for type II membrane protein membrane pass occupies residues 7–29; it reads AGLVLWGAILFVAWNALLLLFFW. Over 30–447 the chain is Lumenal; that stretch reads TRPVPSRLPS…TWDGYDPSWT (418 aa). A disulfide bridge links Cys115 with Cys145. Substrate contacts are provided by Arg117, Asp144, His190, and Asp212. Asp213 is a binding site for Mn(2+). A disulfide bridge links Cys239 with Cys305. Catalysis depends on Asp291, which acts as the Proton acceptor. Residue Ser322 coordinates substrate.

The protein belongs to the glycosyltransferase 13 family. Interacts with MGAT4D. Interacts with BRI3. Mn(2+) serves as cofactor.

It is found in the golgi apparatus membrane. The protein resides in the cytoplasm. Its subcellular location is the perinuclear region. The enzyme catalyses N(4)-(alpha-D-Man-(1-&gt;3)-[alpha-D-Man-(1-&gt;3)-[alpha-D-Man-(1-&gt;6)]-alpha-D-Man-(1-&gt;6)]-beta-D-Man-(1-&gt;4)-beta-D-GlcNAc-(1-&gt;4)-beta-D-GlcNAc)-L-asparaginyl-[protein] (N-glucan mannose isomer 5A1,2) + UDP-N-acetyl-alpha-D-glucosamine = N(4)-{beta-D-GlcNAc-(1-&gt;2)-alpha-D-Man-(1-&gt;3)-[alpha-D-Man-(1-&gt;3)-[alpha-D-Man-(1-&gt;6)]-alpha-D-Man-(1-&gt;6)]-beta-D-Man-(1-&gt;4)-beta-D-GlcNAc-(1-&gt;4)-beta-D-GlcNAc}-L-asparaginyl-[protein] + UDP + H(+). The protein operates within protein modification; protein glycosylation. Its function is as follows. Initiates complex N-linked carbohydrate formation. Essential for the conversion of high-mannose to hybrid and complex N-glycans. The sequence is that of Alpha-1,3-mannosyl-glycoprotein 2-beta-N-acetylglucosaminyltransferase (MGAT1) from Oryctolagus cuniculus (Rabbit).